The chain runs to 442 residues: Mirror-image polydactyly gene 1 protein (442 aa).

The disordered stretch occupies residues 1–39 (MENWSKDITHSYLEQETTGINKSTQPDEQLTMNSEKSMH). Polar residues predominate over residues 12 to 35 (YLEQETTGINKSTQPDEQLTMNSE). Coiled coils occupy residues 107-212 (SDKE…LENI) and 253-435 (ECKM…KVGT).

In terms of tissue distribution, expressed very weakly in heart, liver, skeletal muscle, kidney, pancreas and fetal kidney. Not detected in brain, placenta and lung.

The chain is Mirror-image polydactyly gene 1 protein (MIPOL1) from Homo sapiens (Human).